The following is a 383-amino-acid chain: S-(hydroxymethyl)glutathione dehydrogenase (383 aa).

Position 51 (cysteine 51) interacts with Zn(2+). An NAD(+)-binding site is contributed by histidine 52. Positions 73, 74, 103, 106, 109, 117, and 180 each coordinate Zn(2+). NAD(+)-binding positions include 205–210 (GAGCVG), aspartate 229, and 298–300 (IGV).

Belongs to the zinc-containing alcohol dehydrogenase family. Class-III subfamily. Requires Zn(2+) as cofactor.

The enzyme catalyses a primary alcohol + NAD(+) = an aldehyde + NADH + H(+). The catalysed reaction is a secondary alcohol + NAD(+) = a ketone + NADH + H(+). It carries out the reaction S-(hydroxymethyl)glutathione + NADP(+) = S-formylglutathione + NADPH + H(+). It catalyses the reaction S-(hydroxymethyl)glutathione + NAD(+) = S-formylglutathione + NADH + H(+). The enzyme catalyses S-nitrosoglutathione + NADH + H(+) = S-(hydroxysulfenamide)glutathione + NAD(+). Oxidizes long-chain alcohols and, in the presence of glutathione, is able to oxidize formaldehyde. Also acts as a S-nitroso-glutathione reductase by catalyzing the NADH-dependent reduction of S-nitrosoglutathione, thereby regulating protein S-nitrosylation. The chain is S-(hydroxymethyl)glutathione dehydrogenase (FDH1) from Aspergillus oryzae (strain ATCC 42149 / RIB 40) (Yellow koji mold).